The primary structure comprises 76 residues: Serine palmitoyltransferase small subunit B (76 aa).

Topologically, residues 1–11 (MDFKRVKEYFA) are cytoplasmic. A helical membrane pass occupies residues 12–29 (WLYYQYQIITCCAVMEPW). At 30–36 (EQSMLNT) the chain is on the lumenal side. The chain crosses the membrane as a helical span at residues 37-57 (IILTIVAMVVYTAYVFIPIHI). Topologically, residues 58–76 (RLAWEFFSKICGYDSSISN) are cytoplasmic.

This sequence belongs to the SPTSS family. SPTSSB subfamily. Component of the serine palmitoyltransferase (SPT) complex, which is composed of SPTLC1, SPTLC2 or SPTLC3 and SPTSSA or SPTSSB. The heterodimer consisting of SPTLC1 and SPTLC2/SPTLC3 forms the catalytic core of the enzyme, while SPTSSA or SPTSSB subunits determine substrate specificity. SPT also interacts with ORMDL proteins, especially ORMDL3, which negatively regulate SPT activity in the presence of ceramides. Expression is strong in hypogonadal (hpg) mouse prostate, weak in mature castrated mouse prostate and absent in normal intact or androgen-replaced hpg mouse prostates.

Its subcellular location is the endoplasmic reticulum membrane. It participates in lipid metabolism; sphingolipid metabolism. Component of the serine palmitoyltransferase multisubunit enzyme (SPT) that catalyzes the initial and rate-limiting step in sphingolipid biosynthesis by condensing L-serine and activated acyl-CoA (most commonly palmitoyl-CoA) to form long-chain bases. The SPT complex is composed of SPTLC1, SPTLC2 or SPTLC3 and SPTSSA or SPTSSB. Within this complex, the heterodimer consisting of SPTLC1 and SPTLC2/SPTLC3 forms the catalytic core. Within the SPT complex, SPTSSB stimulates the catalytic activity and plays a role in substrate specificity. SPT complexes with this subunit showing a preference for longer acyl-CoAs. The SPTLC1-SPTLC2-SPTSSB complex shows a strong preference for C18-CoA substrate, while the SPTLC1-SPTLC3-SPTSSB isozyme displays an ability to use a broader range of acyl-CoAs, without apparent preference. In Mus musculus (Mouse), this protein is Serine palmitoyltransferase small subunit B (Sptssb).